We begin with the raw amino-acid sequence, 223 residues long: UPF0173 metal-dependent hydrolase THA_544 (223 aa).

It belongs to the UPF0173 family.

The sequence is that of UPF0173 metal-dependent hydrolase THA_544 from Thermosipho africanus (strain TCF52B).